We begin with the raw amino-acid sequence, 313 residues long: tRNA dimethylallyltransferase (313 aa).

10-17 (GPTASGKT) contacts ATP. 12 to 17 (TASGKT) lines the substrate pocket. Interaction with substrate tRNA regions lie at residues 35–38 (DSAM), 159–163 (QRIQR), and 240–245 (RCVGYR).

It belongs to the IPP transferase family. In terms of assembly, monomer. Mg(2+) is required as a cofactor.

It catalyses the reaction adenosine(37) in tRNA + dimethylallyl diphosphate = N(6)-dimethylallyladenosine(37) in tRNA + diphosphate. In terms of biological role, catalyzes the transfer of a dimethylallyl group onto the adenine at position 37 in tRNAs that read codons beginning with uridine, leading to the formation of N6-(dimethylallyl)adenosine (i(6)A). This Legionella pneumophila subsp. pneumophila (strain Philadelphia 1 / ATCC 33152 / DSM 7513) protein is tRNA dimethylallyltransferase.